We begin with the raw amino-acid sequence, 366 residues long: MIEKMILRRFFSTKSSTMRAWVSENGSGVELKEVPLPVINKPGQVLLKVKAASVNPIDVDMSQGYGREFLGTWKKIESCDAAASRFPLIPGRDCTAVVESVGGDVHNLAPGDEVMAVVPVILPGTHAEFVVTDSKYCSKKPSNLSFVSAAALPYVASTAYSAFTIARVSQRNAKQQRVLIHGGAGGVGSMAIQLLKAWGCEKIVATCAKGSFDIVKQLGAIPVDYTSDQATQELIEHAPFEVILDTVDSQLAKWSDNVMGVWRNCVHVSIVSPLMREMDKNGVPLGLVTTAMKHFERSFQSHLRGRWFSYAFFRPSSDLMSQLSRFAEDGKIVPVVEQVMGFEELEKAYEKVSQLNGRGKTVIKYD.

The N-terminal 20 residues, Met1–Ala20, are a transit peptide targeting the mitochondrion.

It belongs to the zinc-containing alcohol dehydrogenase family. Quinone oxidoreductase subfamily. Expressed in pharynx, muscles and intestine.

It localises to the mitochondrion. Its function is as follows. Plays a role in oxygen metabolism in the mitochondria by regulating the levels of reactive oxygen species (ROS) thereby conferring resistance to oxidative stress. Involved in resistance to P.aeruginosa PA14 infection. Regulates lifespan. The chain is Reticulon-4-interacting protein 1, mitochondrial from Caenorhabditis elegans.